A 169-amino-acid chain; its full sequence is Peptide deformylase (169 aa).

Positions 91 and 133 each coordinate Fe cation. Glu134 is a catalytic residue. His137 is a binding site for Fe cation.

The protein belongs to the polypeptide deformylase family. Fe(2+) serves as cofactor.

It catalyses the reaction N-terminal N-formyl-L-methionyl-[peptide] + H2O = N-terminal L-methionyl-[peptide] + formate. In terms of biological role, removes the formyl group from the N-terminal Met of newly synthesized proteins. Requires at least a dipeptide for an efficient rate of reaction. N-terminal L-methionine is a prerequisite for activity but the enzyme has broad specificity at other positions. This chain is Peptide deformylase, found in Escherichia coli (strain K12 / DH10B).